The primary structure comprises 440 residues: UPF0761 membrane protein Rru_A2625 (440 aa).

The next 7 helical transmembrane spans lie at 29 to 49 (ILATAGSFTILVLRALITHDI), 61 to 81 (LLALVPLIAIALAILAAFPGF), 117 to 137 (GLTALGVAGLTLTAIILLLTI), 157 to 177 (LLVYWSVLTGGPLLMGLSFSL), 201 to 221 (PTLGPPLLSLTAMTLLYMLVP), 224 to 244 (PVPLFHALAGALVATLASALL), and 264 to 284 (ALAALPAFLVWMYLSWAVVLM).

The protein belongs to the UPF0761 family.

The protein resides in the cell inner membrane. The chain is UPF0761 membrane protein Rru_A2625 from Rhodospirillum rubrum (strain ATCC 11170 / ATH 1.1.1 / DSM 467 / LMG 4362 / NCIMB 8255 / S1).